The following is a 179-amino-acid chain: Large ribosomal subunit protein uL5 (179 aa).

This sequence belongs to the universal ribosomal protein uL5 family. As to quaternary structure, part of the 50S ribosomal subunit; part of the 5S rRNA/L5/L18/L25 subcomplex. Contacts the 5S rRNA and the P site tRNA. Forms a bridge to the 30S subunit in the 70S ribosome.

In terms of biological role, this is one of the proteins that bind and probably mediate the attachment of the 5S RNA into the large ribosomal subunit, where it forms part of the central protuberance. In the 70S ribosome it contacts protein S13 of the 30S subunit (bridge B1b), connecting the 2 subunits; this bridge is implicated in subunit movement. Contacts the P site tRNA; the 5S rRNA and some of its associated proteins might help stabilize positioning of ribosome-bound tRNAs. The protein is Large ribosomal subunit protein uL5 of Prochlorococcus marinus (strain MIT 9303).